We begin with the raw amino-acid sequence, 210 residues long: NADH dehydrogenase [ubiquinone] iron-sulfur protein 8, mitochondrial (210 aa).

A mitochondrion-targeting transit peptide spans 1 to 34 (MRCLTTPMLLRALAQAARAGPPGGRSLHSSAVAA). 4Fe-4S ferredoxin-type domains are found at residues 102-131 (RRYPSGEERCIACKLCEAICPAQAITIEAE) and 141-170 (TRYDIDMTKCIYCGFCQEACPVDAIVEGPN). Residues cysteine 111, cysteine 114, cysteine 117, cysteine 121, cysteine 150, cysteine 153, cysteine 156, and cysteine 160 each coordinate [4Fe-4S] cluster.

Belongs to the complex I 23 kDa subunit family. In terms of assembly, core subunit of respiratory chain NADH dehydrogenase (Complex I) which is composed of 45 different subunits. This is a component of the iron-sulfur (IP) fragment of the enzyme. Interacts with RAB5IF. It depends on [4Fe-4S] cluster as a cofactor. In terms of tissue distribution, expressed in all tissues with the highest level in heart and skeletal muscle and the lowest level in lung.

It localises to the mitochondrion inner membrane. The catalysed reaction is a ubiquinone + NADH + 5 H(+)(in) = a ubiquinol + NAD(+) + 4 H(+)(out). Core subunit of the mitochondrial membrane respiratory chain NADH dehydrogenase (Complex I) which catalyzes electron transfer from NADH through the respiratory chain, using ubiquinone as an electron acceptor. Essential for the catalytic activity and assembly of complex I. The protein is NADH dehydrogenase [ubiquinone] iron-sulfur protein 8, mitochondrial (NDUFS8) of Homo sapiens (Human).